We begin with the raw amino-acid sequence, 293 residues long: Large ribosomal subunit protein uL18 (293 aa).

A compositionally biased stretch (basic and acidic residues) spans 247–263 (IRANPAHEKKQPRDGLV). Residues 247-283 (IRANPAHEKKQPRDGLVKKRWNRAKMSLKQKRDRVKQ) form a disordered region. Basic residues predominate over residues 264–283 (KKRWNRAKMSLKQKRDRVKQ).

It belongs to the universal ribosomal protein uL18 family. In terms of assembly, component of the large ribosomal subunit (LSU).

Its subcellular location is the cytoplasm. The protein resides in the nucleus. Its function is as follows. Component of the ribosome, a large ribonucleoprotein complex responsible for the synthesis of proteins in the cell. The small ribosomal subunit (SSU) binds messenger RNAs (mRNAs) and translates the encoded message by selecting cognate aminoacyl-transfer RNA (tRNA) molecules. The large subunit (LSU) contains the ribosomal catalytic site termed the peptidyl transferase center (PTC), which catalyzes the formation of peptide bonds, thereby polymerizing the amino acids delivered by tRNAs into a polypeptide chain. The nascent polypeptides leave the ribosome through a tunnel in the LSU and interact with protein factors that function in enzymatic processing, targeting, and the membrane insertion of nascent chains at the exit of the ribosomal tunnel. The sequence is that of Large ribosomal subunit protein uL18 (RPL5) from Suberites domuncula (Sponge).